The sequence spans 231 residues: LexA repressor (231 aa).

A disordered region spans residues 1 to 24; sequence MTDRKEHKMKPGRRPTEGMTPSQE. The segment at residues 43–62 is a DNA-binding region (H-T-H motif); that stretch reads VKEIAEALGMKTPSAHEQVQ. Catalysis depends on for autocatalytic cleavage activity residues Ser146 and Lys183.

The protein belongs to the peptidase S24 family. As to quaternary structure, homodimer.

It catalyses the reaction Hydrolysis of Ala-|-Gly bond in repressor LexA.. In terms of biological role, represses a number of genes involved in the response to DNA damage (SOS response), including recA and lexA. In the presence of single-stranded DNA, RecA interacts with LexA causing an autocatalytic cleavage which disrupts the DNA-binding part of LexA, leading to derepression of the SOS regulon and eventually DNA repair. This Magnetococcus marinus (strain ATCC BAA-1437 / JCM 17883 / MC-1) protein is LexA repressor.